Consider the following 515-residue polypeptide: SWI/SNF-related matrix-associated actin-dependent regulator of chromatin subfamily D member 1 (515 aa).

The tract at residues 1-128 (MAARAGFQSV…RNHNAKKKKM (128 aa)) is disordered. A compositionally biased stretch (gly residues) spans 14–23 (GGAGASGGAG). The interval 43–167 (APGQGLYRSP…DQTIMRKRLD (125 aa)) is interaction with ESR1, NR1H4, NR3C1, PGR and SMARCA4. Residues arginine 68 and arginine 88 each carry the asymmetric dimethylarginine modification. Lysine 101 participates in a covalent cross-link: Glycyl lysine isopeptide (Lys-Gly) (interchain with G-Cter in SUMO2). The span at 104–117 (APQQIQQVQQQAVQ) shows a compositional bias: low complexity. Residues 168–474 (IQEALKRPIK…TMTDVVGNPE (307 aa)) form an interaction with SMARCC1 and SMARCC2 region. Residues 180–515 (RKLRIFISNT…LEQALGIRNT (336 aa)) form a necessary for GR/NR3C1-mediated remodeling and transcription from chromatin; required for GR/NR3C1 interaction with the BRG1/SMARCA4 complex in vivo region. Threonine 203 is subject to Phosphothreonine. Lysine 223 is modified (N6-acetyllysine). The 78-residue stretch at 290-367 (YQPPQFKLDP…PQRLHALLMP (78 aa)) folds into the SWIB/MDM2 domain. Positions 412–440 (ASQQEIATLDNKIHETIETINQLKTQREF) form a coiled coil.

This sequence belongs to the SMARCD family. Component of the multiprotein chromatin-remodeling complexes SWI/SNF: SWI/SNF-A (BAF), SWI/SNF-B (PBAF) and related complexes. The canonical complex contains a catalytic subunit (either SMARCA4/BRG1/BAF190A or SMARCA2/BRM/BAF190B), and at least SMARCE1, ACTL6A/BAF53, SMARCC1/BAF155, SMARCC2/BAF170, and SMARCB1/SNF5/BAF47. Other subunits specific to each of the complexes may also be present permitting several possible combinations developmentally and tissue specific. Component of the BAF complex, which includes at least actin (ACTB), ARID1A/BAF250A, ARID1B/BAF250B, SMARCA2/BRM, SMARCA4/BRG1/BAF190A, ACTL6A/BAF53, ACTL6B/BAF53B, SMARCE1/BAF57, SMARCC1/BAF155, SMARCC2/BAF170, SMARCB1/SNF5/INI1, and one or more SMARCD1/BAF60A, SMARCD2/BAF60B, or SMARCD3/BAF60C. In muscle cells, the BAF complex also contains DPF3. Component of neural progenitors-specific chromatin remodeling complex (npBAF complex) composed of at least, ARID1A/BAF250A or ARID1B/BAF250B, SMARCD1/BAF60A, SMARCD3/BAF60C, SMARCA2/BRM/BAF190B, SMARCA4/BRG1/BAF190A, SMARCB1/BAF47, SMARCC1/BAF155, SMARCE1/BAF57, SMARCC2/BAF170, PHF10/BAF45A, ACTL6A/BAF53A and actin. Component of neuron-specific chromatin remodeling complex (nBAF complex) composed of at least, ARID1A/BAF250A or ARID1B/BAF250B, SMARCD1/BAF60A, SMARCD3/BAF60C, SMARCA2/BRM/BAF190B, SMARCA4/BRG1/BAF190A, SMARCB1/BAF47, SMARCC1/BAF155, SMARCE1/BAF57, SMARCC2/BAF170, DPF1/BAF45B, DPF3/BAF45C, ACTL6B/BAF53B and actin. Component of the SWI/SNF-B (PBAF) chromatin remodeling complex, at least composed of SMARCA4/BRG1, SMARCB1/BAF47/SNF5, ACTL6A/BAF53A or ACTL6B/BAF53B, SMARCE1/BAF57, SMARCD1/BAF60A, SMARCD2/BAF60B, perhaps SMARCD3/BAF60C, SMARCC1/BAF155, SMARCC2/BAF170, PBRM1/BAF180, ARID2/BAF200 and actin (ACTB). Component of SWI/SNF (GBAF) subcomplex, which includes at least BICRA or BICRAL (mutually exclusive), BRD9, SS18, SMARCA2/BRM, SMARCA4/BRG1/BAF190A, ACTL6A/BAF53, SMARCC1/BAF155, and SMARCD1/BAF60A. Specifically interacts with the VDR heterodimer complex. Interacts with ESR1, NR3C1, NR1H4, PGR, SMARCA4, SMARCC1 and SMARCC2. Interacts with DPF2. Interacts with DPF3a (isoform 2 of DPF3/BAF45C) and with HDGFL2 in a DPF3a-dependent manner. Interacts with FOS, FOSB isoform 1 and 2, FOSL1 and FOSL2. Interacts with AKIRIN2. As to expression, ubiquitous.

The protein resides in the nucleus. Functionally, involved in transcriptional activation and repression of select genes by chromatin remodeling (alteration of DNA-nucleosome topology). Component of SWI/SNF chromatin remodeling complexes that carry out key enzymatic activities, changing chromatin structure by altering DNA-histone contacts within a nucleosome in an ATP-dependent manner. Belongs to the neural progenitors-specific chromatin remodeling complex (npBAF complex) and the neuron-specific chromatin remodeling complex (nBAF complex). During neural development a switch from a stem/progenitor to a postmitotic chromatin remodeling mechanism occurs as neurons exit the cell cycle and become committed to their adult state. The transition from proliferating neural stem/progenitor cells to postmitotic neurons requires a switch in subunit composition of the npBAF and nBAF complexes. As neural progenitors exit mitosis and differentiate into neurons, npBAF complexes which contain ACTL6A/BAF53A and PHF10/BAF45A, are exchanged for homologous alternative ACTL6B/BAF53B and DPF1/BAF45B or DPF3/BAF45C subunits in neuron-specific complexes (nBAF). The npBAF complex is essential for the self-renewal/proliferative capacity of the multipotent neural stem cells. The nBAF complex along with CREST plays a role regulating the activity of genes essential for dendrite growth. Has a strong influence on vitamin D-mediated transcriptional activity from an enhancer vitamin D receptor element (VDRE). May be a link between mammalian SWI-SNF-like chromatin remodeling complexes and the vitamin D receptor (VDR) heterodimer. Mediates critical interactions between nuclear receptors and the BRG1/SMARCA4 chromatin-remodeling complex for transactivation. In Mus musculus (Mouse), this protein is SWI/SNF-related matrix-associated actin-dependent regulator of chromatin subfamily D member 1 (Smarcd1).